Here is a 432-residue protein sequence, read N- to C-terminus: Adenosylhomocysteinase (432 aa).

Ser2 bears the N-acetylserine mark. The substrate site is built by Thr57, Asp131, and Glu156. Ser183 carries the phosphoserine modification. The tract at residues Ser183–Ala350 is NAD binding. Residues Lys186 and Asp190 each coordinate substrate. Lys186 carries the post-translational modification N6-(2-hydroxyisobutyryl)lysine. The residue at position 193 (Tyr193) is a Phosphotyrosine.

Belongs to the adenosylhomocysteinase family. In terms of assembly, homotetramer. Interaction with AHCYL1. NAD(+) is required as a cofactor.

The protein localises to the cytoplasm. It localises to the melanosome. Its subcellular location is the nucleus. It is found in the endoplasmic reticulum. The catalysed reaction is S-adenosyl-L-homocysteine + H2O = L-homocysteine + adenosine. The protein operates within amino-acid biosynthesis; L-homocysteine biosynthesis; L-homocysteine from S-adenosyl-L-homocysteine: step 1/1. In terms of biological role, catalyzes the hydrolysis of S-adenosyl-L-homocysteine to form adenosine and homocysteine. Binds copper ions. The sequence is that of Adenosylhomocysteinase (AHCY) from Macaca fascicularis (Crab-eating macaque).